We begin with the raw amino-acid sequence, 1178 residues long: F-box/WD repeat-containing protein A-like protein (1178 aa).

The region spanning 1–208 (MQYVNGMDIV…TLPNLIKYIK (208 aa)) is the START domain. 3 disordered regions span residues 223–296 (KTPD…NLNE), 569–594 (SLII…DNGI), and 618–649 (SSSS…STFS). 2 stretches are compositionally biased toward low complexity: residues 229–293 (NPNL…SNEN) and 571–580 (IINSPPNSNN). The 47-residue stretch at 717–763 (CSLFDLLPYEMIQYIFTLMDATHLIRMSRTCKYFNRICLDDNIWRDL) folds into the F-box domain. Residues 804-841 (KKSNNSSPLSASSSSSSPSPPLLPPPPPPIPQLPDMLL) form a disordered region. A compositionally biased stretch (low complexity) spans 809–820 (SSPLSASSSSSS). Positions 821–835 (PSPPLLPPPPPPIPQ) are enriched in pro residues. WD repeat units lie at residues 886–923 (GHKG…CEST), 925–979 (RCGA…IEKE), 981–1017 (RFLY…ELQM), 1020–1059 (IENT…TELV), 1062–1100 (GHKG…SAIH), 1104–1141 (SHSS…EPNL), and 1146–1178 (NNLS…FNSK).

Its function is as follows. Substrate recognition component of a SCF (SKP1-CUL1-F-box protein) E3 ubiquitin-protein ligase complex which mediates the ubiquitination and subsequent proteasomal degradation of target proteins. The sequence is that of F-box/WD repeat-containing protein A-like protein from Dictyostelium discoideum (Social amoeba).